The following is a 241-amino-acid chain: Viral CASP8 and FADD-like apoptosis regulator (241 aa).

DED domains lie at 8-78 (PSLP…SRFG) and 95-175 (RYRK…QLVE). The tract at residues 212 to 241 (CMPVQESSDSPELLRTPVQESSSDSPEQTT) is disordered. Polar residues predominate over residues 229–241 (VQESSSDSPEQTT).

As to quaternary structure, associates with the death-inducing signaling complex (DISC) formed by TNFRSF6/FAS, FADD and CASP8. Interacts with FADD. Interacts with host TRAF2. Interacts with host NEMO/IKBKG (via N-terminus). Interacts with host SH3BP4; this interaction plays an important in the suppression of host autophagy.

It is found in the host cytoplasm. The protein localises to the host nucleus. Inhibits TNFRSF1A, TNFRSF6/FAS and TNFRSF12 induced apoptosis. Directs the degradation of host NFKBIB but not NFKBIA. Also suppresses host NF-kappa-B activation by interacting with and preventing ubiquitination of host NEMO/IKBKG, the NF-kappa-B essential modulator subunit of the IKK complex. Interferes with host CASP8/caspase-8 recruitment and activation at the death-inducing signaling complex (DISC). May lead to higher virus production and contribute to virus persistence and oncogenicity. Also participates in the inhibition of host autophagy by interacting with host SH3BP4. In Homo sapiens (Human), this protein is Viral CASP8 and FADD-like apoptosis regulator.